Here is a 489-residue protein sequence, read N- to C-terminus: Protein-export membrane protein SecD (489 aa).

6 helical membrane passes run 17–37 (VLIVLVLVILSVLSIYAIPPA), 328–348 (FIQIVCIAAAILGLLAVAFMV), 356–376 (SIVVPMILVNLSEIIILLGIA), 384–404 (LASIAGLIAVIGTGIDQLVVI), 428–448 (LGIITVSASTTIFAMLPLALM), and 450–470 (LSTLKGFAIITILGVLIGVIF).

It belongs to the SecD/SecF family. SecD subfamily. Part of the protein translocation apparatus. Forms a complex with SecF.

It is found in the cell membrane. Functionally, involved in protein export. The chain is Protein-export membrane protein SecD from Methanolacinia petrolearia (strain DSM 11571 / OCM 486 / SEBR 4847) (Methanoplanus petrolearius).